The following is a 132-amino-acid chain: Small ribosomal subunit protein uS11c (132 aa).

The protein belongs to the universal ribosomal protein uS11 family. As to quaternary structure, part of the 30S ribosomal subunit.

The protein localises to the plastid. It is found in the chloroplast. In Cryptomeria japonica (Japanese cedar), this protein is Small ribosomal subunit protein uS11c.